A 184-amino-acid polypeptide reads, in one-letter code: Ras-related protein O-Krev (184 aa).

Residue 10-17 (GSGGVGKS) coordinates GTP. The Effector region signature appears at 32-40 (YDPTIEDSY). Residues 57–61 (DTAGT) and 116–119 (NKCD) each bind GTP. Position 181 is a cysteine methyl ester (Cys181). The S-geranylgeranyl cysteine moiety is linked to residue Cys181. Positions 182-184 (TLL) are cleaved as a propeptide — removed in mature form.

This sequence belongs to the small GTPase superfamily. Ras family.

The protein localises to the cell membrane. The catalysed reaction is GTP + H2O = GDP + phosphate + H(+). In Diplobatis ommata (Ocellated electric ray), this protein is Ras-related protein O-Krev.